The following is a 191-amino-acid chain: Stress response regulator protein 1 (191 aa).

Residues 62-181 (SFLLVDDNEI…TNYILQKIEQ (120 aa)) enclose the Response regulatory domain. The residue at position 114 (D114) is a 4-aspartylphosphate.

Its function is as follows. Required for stress adaptation, morphogenesis and virulence. In Clavispora lusitaniae (strain ATCC 42720) (Yeast), this protein is Stress response regulator protein 1 (SRR1).